The primary structure comprises 352 residues: Decapping nuclease din1 (352 aa).

Substrate-binding positions include Arg33 and 93 to 95; that span reads WRG. Glu150 serves as a coordination point for a divalent metal cation. The substrate site is built by Cys182 and Glu199. An a divalent metal cation-binding site is contributed by Asp201. Ser218 bears the Phosphoserine mark. The a divalent metal cation site is built by Glu239 and Leu240. Lys241 and Gln263 together coordinate substrate.

The protein belongs to the DXO/Dom3Z family. As to quaternary structure, interacts with dhp1/Rat1; the interaction is direct, stabilizes dhp1 protein structure and stimulates its exoribonuclease activity. The interaction also stimulates din1 pyrophosphohydrolase activity, probably by recruiting it to mRNA substrates. A divalent metal cation serves as cofactor.

It is found in the nucleus. It carries out the reaction a 5'-end NAD(+)-phospho-ribonucleoside in mRNA + H2O = a 5'-end phospho-ribonucleoside in mRNA + NAD(+) + H(+). The catalysed reaction is a 5'-end (N(7)-methyl 5'-triphosphoguanosine)-ribonucleoside-ribonucleotide in mRNA + H2O = a (N(7)-methyl 5'-triphosphoguanosine)-nucleoside + a 5'-end phospho-ribonucleoside in mRNA + H(+). The enzyme catalyses a 5'-end triphospho-ribonucleoside in mRNA + H2O = a 5'-end phospho-ribonucleoside in mRNA + diphosphate + H(+). In terms of biological role, decapping enzyme for NAD-capped RNAs: specifically hydrolyzes the nicotinamide adenine dinucleotide (NAD) cap from a subset of RNAs by removing the entire NAD moiety from the 5'-end of an NAD-capped RNA. The NAD-cap is present at the 5'-end of some RNAs and snoRNAs. In contrast to the canonical 5'-end N7 methylguanosine (m7G) cap, the NAD cap promotes mRNA decay. Also acts as a non-canonical decapping enzyme that removes the entire cap structure of m7G capped or incompletely capped RNAs and mediates their subsequent degradation. Specifically degrades pre-mRNAs with a defective m7G cap and is part of a pre-mRNA capping quality control. Has decapping activity toward incomplete 5'-end m7G cap mRNAs such as unmethylated 5'-end-capped RNA (cap0), while it has no activity toward 2'-O-ribose methylated m7G cap (cap1). Also possesses RNA 5'-pyrophosphohydrolase activity by hydrolyzing the 5'-end triphosphate to release pyrophosphates. Stimulates exoribonuclease activity of dhp1, allowing it to degrade RNAs with stable secondary structure more effectively. In Schizosaccharomyces pombe (strain 972 / ATCC 24843) (Fission yeast), this protein is Decapping nuclease din1.